The primary structure comprises 279 residues: Large ribosomal subunit protein uL2 (279 aa).

Residues 216 to 279 (KRPSVRGVVM…IQKRKRNRNR (64 aa)) are disordered. Residues 270 to 279 (IQKRKRNRNR) are compositionally biased toward basic residues.

It belongs to the universal ribosomal protein uL2 family. In terms of assembly, part of the 50S ribosomal subunit. Forms a bridge to the 30S subunit in the 70S ribosome.

One of the primary rRNA binding proteins. Required for association of the 30S and 50S subunits to form the 70S ribosome, for tRNA binding and peptide bond formation. It has been suggested to have peptidyltransferase activity; this is somewhat controversial. Makes several contacts with the 16S rRNA in the 70S ribosome. This is Large ribosomal subunit protein uL2 from Leptospira interrogans serogroup Icterohaemorrhagiae serovar copenhageni (strain Fiocruz L1-130).